Here is a 104-residue protein sequence, read N- to C-terminus: Large ribosomal subunit protein uL24 (104 aa).

A disordered region spans residues 82 to 104 (RVGYRFDENGKKVRVSRRNGKDI). Positions 93 to 104 (KVRVSRRNGKDI) are enriched in basic residues.

The protein belongs to the universal ribosomal protein uL24 family. In terms of assembly, part of the 50S ribosomal subunit.

One of two assembly initiator proteins, it binds directly to the 5'-end of the 23S rRNA, where it nucleates assembly of the 50S subunit. Its function is as follows. One of the proteins that surrounds the polypeptide exit tunnel on the outside of the subunit. The protein is Large ribosomal subunit protein uL24 of Corynebacterium glutamicum (strain R).